Here is an 82-residue protein sequence, read N- to C-terminus: Cytotoxin 6 (82 aa).

The first 21 residues, 1–21, serve as a signal peptide directing secretion; sequence MKTLLLTLVVVTIVCLDLGYT. 4 disulfides stabilise this stretch: Cys24–Cys42, Cys35–Cys59, Cys63–Cys74, and Cys75–Cys80.

This sequence belongs to the three-finger toxin family. Short-chain subfamily. Type IA cytotoxin sub-subfamily. As to quaternary structure, monomer in solution; Homodimer and oligomer in the presence of negatively charged lipids forming a pore with a size ranging between 20 and 30 Angstroms. Expressed by the venom gland.

It is found in the secreted. Its subcellular location is the target cell membrane. Functionally, shows cytolytic activity on many different cells by forming pore in lipid membranes. In vivo, increases heart rate or kills the animal by cardiac arrest. In addition, it binds to heparin with high affinity, interacts with Kv channel-interacting protein 1 (KCNIP1) in a calcium-independent manner, and binds to integrin alpha-V/beta-3 (ITGAV/ITGB3) with moderate affinity. In Naja atra (Chinese cobra), this protein is Cytotoxin 6.